The sequence spans 872 residues: Cellulose synthase catalytic subunit [UDP-forming] (872 aa).

Helical transmembrane passes span 30–50 (SAFS…FIPL), 151–171 (ILGI…TQPF), 173–193 (PLAQ…VRRM), and 230–250 (LVCG…LVLG). The segment at 271–364 (LWPSVDIFVP…FVSIFDCDHV (94 aa)) is catalytic subdomain A. The active site involves aspartate 313. Positions 360 and 362 each coordinate substrate. A catalytic subdomain B region spans residues 441–501 (KPLDEIGGIA…GQRIRWARGM (61 aa)). The active site involves aspartate 457. Transmembrane regions (helical) follow at residues 525–545 (VNAM…TAPL), 547–567 (FLLL…LFVL), 592–612 (IYET…LINP), 640–660 (IFLV…YFYG), and 668–688 (VVVS…AVAV). The PilZ domain occupies 694-790 (QVRRSHRVEM…QHIDFVQCTF (97 aa)). Residues 833–853 (SVKGIFRVLTSLVSWVVSFIP) traverse the membrane as a helical segment.

Belongs to the glycosyltransferase 2 family. It depends on Mg(2+) as a cofactor.

The protein localises to the cell inner membrane. The catalysed reaction is [(1-&gt;4)-beta-D-glucosyl](n) + UDP-alpha-D-glucose = [(1-&gt;4)-beta-D-glucosyl](n+1) + UDP + H(+). It functions in the pathway glycan metabolism; bacterial cellulose biosynthesis. Its activity is regulated as follows. Activated by bis-(3'-5') cyclic diguanylic acid (c-di-GMP). Its function is as follows. Catalytic subunit of cellulose synthase. It polymerizes uridine 5'-diphosphate glucose to cellulose, which is produced as an extracellular component for mechanical and chemical protection at the onset of the stationary phase, when the cells exhibit multicellular behavior (rdar morphotype). Coexpression of cellulose and thin aggregative fimbriae (curli fimbrae or fibers) leads to a hydrophobic network with tightly packed cells embedded in a highly inert matrix that confers cohesion, elasticity and tissue-like properties to colonies. This chain is Cellulose synthase catalytic subunit [UDP-forming] (bcsA), found in Escherichia coli (strain K12).